A 1333-amino-acid polypeptide reads, in one-letter code: Protein CLASP-1 (1333 aa).

The stretch at 168–206 is one HEAT 1 repeat; it reads LIPQLCRLTNDPNSEVRDASTNCLVDLMVFGGKSIIAKI. A compositionally biased stretch (low complexity) spans 269–305; sequence STTSFTSSARLSTPPRTNAPSLSPSPSTPSPLSLPAA. Positions 269 to 311 are disordered; that stretch reads STTSFTSSARLSTPPRTNAPSLSPSPSTPSPLSLPAANGRSRD. Positions 360 to 389 form a coiled coil; that stretch reads SNSDVREKLETANSVLRNANEDWSKRANQL. Disordered stretches follow at residues 579–711 and 764–792; these read QKML…HQTP and TPPK…NSSN. Over residues 601–611 the composition is skewed to low complexity; the sequence is NQKQPQQPQQN. Over residues 612–644 the composition is skewed to polar residues; it reads ISQKFLSQRSASALDNKSQVLSIAKPQQSNPSR. Low complexity-rich tracts occupy residues 657 to 669 and 686 to 707; these read SSTS…VRSS and TNFN…STST. The stretch at 1266-1304 is one HEAT 2 repeat; that stretch reads VAPCFVSAYDSTSSSVRKCAVFGLVALVQRVGMPRLETH.

This sequence belongs to the CLASP family.

It is found in the cytoplasm. The protein localises to the cytoskeleton. In terms of biological role, microtubule plus-end tracking protein that promotes the stabilization of dynamic microtubules. This is Protein CLASP-1 from Caenorhabditis briggsae.